The primary structure comprises 319 residues: Peroxidase 62 (319 aa).

An N-terminal signal peptide occupies residues 1-22 (MGLVRSFALVIVFLSCLIAVYG). Disulfide bonds link cysteine 34–cysteine 110, cysteine 67–cysteine 72, cysteine 116–cysteine 315, and cysteine 195–cysteine 226. Residue histidine 65 is the Proton acceptor of the active site. Residues aspartate 66, valine 69, glycine 71, aspartate 73, and serine 75 each contribute to the Ca(2+) site. Residue proline 157 participates in substrate binding. Histidine 188 is a heme b binding site. Residue threonine 189 coordinates Ca(2+). Residue asparagine 204 is glycosylated (N-linked (GlcNAc...) asparagine). Aspartate 239, serine 242, and aspartate 247 together coordinate Ca(2+). Residue asparagine 253 is glycosylated (N-linked (GlcNAc...) asparagine).

The protein belongs to the peroxidase family. Classical plant (class III) peroxidase subfamily. The cofactor is heme b. Ca(2+) is required as a cofactor. In terms of tissue distribution, mainly expressed in roots.

The protein localises to the secreted. It carries out the reaction 2 a phenolic donor + H2O2 = 2 a phenolic radical donor + 2 H2O. Functionally, removal of H(2)O(2), oxidation of toxic reductants, biosynthesis and degradation of lignin, suberization, auxin catabolism, response to environmental stresses such as wounding, pathogen attack and oxidative stress. These functions might be dependent on each isozyme/isoform in each plant tissue. This is Peroxidase 62 (PER62) from Arabidopsis thaliana (Mouse-ear cress).